The following is a 570-amino-acid chain: Phosphocholine hydrolase Lem3 (570 aa).

The protein resides in the secreted. It localises to the host cytoplasm. The catalysed reaction is [Rab1 protein]-O-phosphocholine-L-serine + H2O = [Rab1 protein]-L-serine + phosphocholine + H(+). In terms of biological role, virulence effector that plays a role in hijacking the host vesicular trafficking by recruiting the small guanosine triphosphatase (GTPase) Rab1 to the cytosolic face of the Legionella-containing vacuole (LCVs). Acts as a phosphocholine hydrolase by mediating the hydrolysis of phosphocholine to Ser residues of host RAB1 (RAB1A, RAB1B or RAB1C). Dephosphocholination of target proteins restores accessibility to GTPase effector LepB. Can act on both GDP-bound and GTP-bound Rab proteins. In Legionella pneumophila subsp. pneumophila (strain Philadelphia 1 / ATCC 33152 / DSM 7513), this protein is Phosphocholine hydrolase Lem3 (lem3).